We begin with the raw amino-acid sequence, 839 residues long: Homeobox-leucine zipper protein HOX10 (839 aa).

Disordered stretches follow at residues 1 to 24 and 132 to 157; these read MAAAVAMRGSSSDGGGYDKVSGMD and QNTPLANDTSCESNVTTPQNPLRDAS. A DNA-binding region (homeobox) is located at residues 24–87; the sequence is DSGKYVRYTP…NRRCRDKQRK (64 aa). The stretch at 91-134 forms a coiled coil; sequence RLQAVNRKLTAMNKLLMEENERLQKQVSQLVHENAHMRQQLQNT. The START domain maps to 155 to 383; sequence DASNPSGLLS…IAQETSGEVV (229 aa).

It belongs to the HD-ZIP homeobox family. Class III subfamily. Expressed in stems, leaf sheaths and blades and panicles.

The protein localises to the nucleus. Probable transcription factor. The polypeptide is Homeobox-leucine zipper protein HOX10 (HOX10) (Oryza sativa subsp. indica (Rice)).